Reading from the N-terminus, the 692-residue chain is Elongation factor G 1 (692 aa).

The tr-type G domain maps to 8–283 (EKTRNIGIMA…SVVEYLPSPV (276 aa)). GTP contacts are provided by residues 17 to 24 (AHIDAGKT), 81 to 85 (DTPGH), and 135 to 138 (NKMD).

This sequence belongs to the TRAFAC class translation factor GTPase superfamily. Classic translation factor GTPase family. EF-G/EF-2 subfamily.

The protein localises to the cytoplasm. Its function is as follows. Catalyzes the GTP-dependent ribosomal translocation step during translation elongation. During this step, the ribosome changes from the pre-translocational (PRE) to the post-translocational (POST) state as the newly formed A-site-bound peptidyl-tRNA and P-site-bound deacylated tRNA move to the P and E sites, respectively. Catalyzes the coordinated movement of the two tRNA molecules, the mRNA and conformational changes in the ribosome. The chain is Elongation factor G 1 from Geobacter metallireducens (strain ATCC 53774 / DSM 7210 / GS-15).